We begin with the raw amino-acid sequence, 129 residues long: Glycine cleavage system H protein (129 aa).

In terms of domain architecture, Lipoyl-binding spans 24–106 (SYTVGITEHA…YGDGWFFRIM (83 aa)). At Lys65 the chain carries N6-lipoyllysine.

Belongs to the GcvH family. In terms of assembly, the glycine cleavage system is composed of four proteins: P, T, L and H. Requires (R)-lipoate as cofactor.

Functionally, the glycine cleavage system catalyzes the degradation of glycine. The H protein shuttles the methylamine group of glycine from the P protein to the T protein. The protein is Glycine cleavage system H protein of Shewanella denitrificans (strain OS217 / ATCC BAA-1090 / DSM 15013).